Reading from the N-terminus, the 125-residue chain is Small ribosomal subunit protein uS13 (125 aa).

Residues 95 to 125 form a disordered region; that stretch reads GLPVNGQRTRTNARTRKGGKKTVANKKKVTK. The span at 105–125 shows a compositional bias: basic residues; the sequence is TNARTRKGGKKTVANKKKVTK.

This sequence belongs to the universal ribosomal protein uS13 family. As to quaternary structure, part of the 30S ribosomal subunit. Forms a loose heterodimer with protein S19. Forms two bridges to the 50S subunit in the 70S ribosome.

Functionally, located at the top of the head of the 30S subunit, it contacts several helices of the 16S rRNA. In the 70S ribosome it contacts the 23S rRNA (bridge B1a) and protein L5 of the 50S subunit (bridge B1b), connecting the 2 subunits; these bridges are implicated in subunit movement. Contacts the tRNAs in the A and P-sites. This chain is Small ribosomal subunit protein uS13, found in Leptospira interrogans serogroup Icterohaemorrhagiae serovar copenhageni (strain Fiocruz L1-130).